Consider the following 351-residue polypeptide: Glycerol-3-phosphate dehydrogenase [NAD(P)+] (351 aa).

4 residues coordinate NADPH: S12, W13, H33, and K114. Sn-glycerol 3-phosphate-binding residues include K114, G145, and S147. A149 is an NADPH binding site. The sn-glycerol 3-phosphate site is built by K200, D253, S263, R264, and N265. K200 acts as the Proton acceptor in catalysis. R264 serves as a coordination point for NADPH. V288 and E290 together coordinate NADPH.

Belongs to the NAD-dependent glycerol-3-phosphate dehydrogenase family.

Its subcellular location is the cytoplasm. The enzyme catalyses sn-glycerol 3-phosphate + NAD(+) = dihydroxyacetone phosphate + NADH + H(+). The catalysed reaction is sn-glycerol 3-phosphate + NADP(+) = dihydroxyacetone phosphate + NADPH + H(+). The protein operates within membrane lipid metabolism; glycerophospholipid metabolism. In terms of biological role, catalyzes the reduction of the glycolytic intermediate dihydroxyacetone phosphate (DHAP) to sn-glycerol 3-phosphate (G3P), the key precursor for phospholipid synthesis. This chain is Glycerol-3-phosphate dehydrogenase [NAD(P)+], found in Lacticaseibacillus casei (strain BL23) (Lactobacillus casei).